We begin with the raw amino-acid sequence, 195 residues long: Peptidyl-tRNA hydrolase (195 aa).

Tyr-17 is a tRNA binding site. The Proton acceptor role is filled by His-22. Tyr-68, Asn-70, and Asn-116 together coordinate tRNA.

Belongs to the PTH family. Monomer.

Its subcellular location is the cytoplasm. It catalyses the reaction an N-acyl-L-alpha-aminoacyl-tRNA + H2O = an N-acyl-L-amino acid + a tRNA + H(+). Its function is as follows. Hydrolyzes ribosome-free peptidyl-tRNAs (with 1 or more amino acids incorporated), which drop off the ribosome during protein synthesis, or as a result of ribosome stalling. Functionally, catalyzes the release of premature peptidyl moieties from peptidyl-tRNA molecules trapped in stalled 50S ribosomal subunits, and thus maintains levels of free tRNAs and 50S ribosomes. This chain is Peptidyl-tRNA hydrolase, found in Shewanella baltica (strain OS155 / ATCC BAA-1091).